The primary structure comprises 356 residues: tRNA N6-adenosine threonylcarbamoyltransferase (356 aa).

Positions 115 and 119 each coordinate Fe cation. Residues 138 to 142, Asp171, Gly184, and Asn283 each bind substrate; that span reads LVSGG. Asp311 provides a ligand contact to Fe cation.

This sequence belongs to the KAE1 / TsaD family. Fe(2+) is required as a cofactor.

The protein localises to the cytoplasm. It carries out the reaction L-threonylcarbamoyladenylate + adenosine(37) in tRNA = N(6)-L-threonylcarbamoyladenosine(37) in tRNA + AMP + H(+). In terms of biological role, required for the formation of a threonylcarbamoyl group on adenosine at position 37 (t(6)A37) in tRNAs that read codons beginning with adenine. Is involved in the transfer of the threonylcarbamoyl moiety of threonylcarbamoyl-AMP (TC-AMP) to the N6 group of A37, together with TsaE and TsaB. TsaD likely plays a direct catalytic role in this reaction. In Prochlorococcus marinus (strain MIT 9515), this protein is tRNA N6-adenosine threonylcarbamoyltransferase.